Consider the following 619-residue polypeptide: MKGGGGGGGGGGGGKRRWKVLVIGVLVLVILSMLVPLAFLLGLHNGFHSPGFVTVQPASSFESFTRINATKHTQRDVSERVDEVLQKINPVLPKKSDINVGSRDVNATSGTDSKKRGLPVSPTVVANPSPANKTKSEASYTGVQRKIVSGDETWRTCEVKYGSYCLWREENKEPMKDAKVKQMKDQLFVARAYYPSIAKMPSQSKLTRDMKQNIQEFERILSESSQDADLPPQVDKKLQKMEAVIAKAKSFPVDCNNVDKKLRQILDLTEDEASFHMKQSVFLYQLAVQTMPKSLHCLSMRLTVEHFKSDSLEDPISEKFSDPSLLHFVIISDNILASSVVINSTVVHARDSKNFVFHVLTDEQNYFAMKQWFIRNPCKQSTVQVLNIEKLELDDSDMKLSLSAEFRVSFPSGDLLASQQNRTHYLSLFSQSHYLLPKLFDKLEKVVILDDDVVVQRDLSPLWDLDMEGKVNGAVKSCTVRLGQLRSLKRGNFDTNACLWMSGLNVVDLARWRALGVSETYQKYYKEMSSGDESSEAIALQASLLTFQDQVYALDDKWALSGLGYDYYINAQAIKNAAILHYNGNMKPWLELGIPNYKNYWRRHLSREDRFLSDCNVNP.

Topologically, residues 1–19 (MKGGGGGGGGGGGGKRRWK) are cytoplasmic. The helical; Signal-anchor for type II membrane protein transmembrane segment at 20–40 (VLVIGVLVLVILSMLVPLAFL) threads the bilayer. At 41 to 619 (LGLHNGFHSP…RFLSDCNVNP (579 aa)) the chain is on the lumenal side. 5 N-linked (GlcNAc...) asparagine glycosylation sites follow: Asn-68, Asn-106, Asn-132, Asn-343, and Asn-421. The tract at residues 95-139 (KSDINVGSRDVNATSGTDSKKRGLPVSPTVVANPSPANKTKSEAS) is disordered. The segment covering 124-139 (VVANPSPANKTKSEAS) has biased composition (polar residues).

This sequence belongs to the glycosyltransferase 8 family. Expressed in roots, inflorescences, flowers, siliques, leaves and stems.

The protein resides in the golgi apparatus membrane. It functions in the pathway glycan metabolism; pectin biosynthesis. Functionally, may be involved in pectin biosynthesis. The chain is Probable galacturonosyltransferase 7 (GAUT7) from Arabidopsis thaliana (Mouse-ear cress).